Here is a 570-residue protein sequence, read N- to C-terminus: Sulfite reductase [NADPH] hemoprotein beta-component (570 aa).

Residues cysteine 434, cysteine 440, cysteine 479, and cysteine 483 each coordinate [4Fe-4S] cluster. Cysteine 483 contributes to the siroheme binding site.

Belongs to the nitrite and sulfite reductase 4Fe-4S domain family. As to quaternary structure, alpha(8)-beta(8). The alpha component is a flavoprotein, the beta component is a hemoprotein. Siroheme serves as cofactor. It depends on [4Fe-4S] cluster as a cofactor.

The enzyme catalyses hydrogen sulfide + 3 NADP(+) + 3 H2O = sulfite + 3 NADPH + 4 H(+). Its pathway is sulfur metabolism; hydrogen sulfide biosynthesis; hydrogen sulfide from sulfite (NADPH route): step 1/1. Component of the sulfite reductase complex that catalyzes the 6-electron reduction of sulfite to sulfide. This is one of several activities required for the biosynthesis of L-cysteine from sulfate. In Salmonella enteritidis PT4 (strain P125109), this protein is Sulfite reductase [NADPH] hemoprotein beta-component.